A 408-amino-acid chain; its full sequence is RNA-splicing ligase RtcB1 (408 aa).

Mn(2+) is bound by residues D75, C78, H168, H185, and H281. GMP is bound at residue 167 to 171 (NHFIE). GMP contacts are provided by residues 281–282 (HN), 313–316 (PGSM), S320, 337–340 (HGAG), and K407. H337 (GMP-histidine intermediate) is an active-site residue.

It belongs to the RtcB family. In terms of assembly, monomer. Requires Mn(2+) as cofactor.

The enzyme catalyses a 3'-end 3'-phospho-ribonucleotide-RNA + a 5'-end dephospho-ribonucleoside-RNA + GTP = a ribonucleotidyl-ribonucleotide-RNA + GMP + diphosphate. It catalyses the reaction a 3'-end 2',3'-cyclophospho-ribonucleotide-RNA + a 5'-end dephospho-ribonucleoside-RNA + GTP + H2O = a ribonucleotidyl-ribonucleotide-RNA + GMP + diphosphate + H(+). In terms of biological role, GTP-dependent RNA ligase that is involved in RNA repair. Joins RNA with 2',3'-cyclic-phosphate or 3'-phosphate ends to RNA with 5'-hydroxy ends. GTP-dependent RNA ligase that is involved in tRNA repair. Repairs broken tRNA(Asp) and tRNA(Arg) that have been cleaved by colicin E5 or colicin D, respectively. Does not repair damaged 16S rRNA in 30S ribosomal subunits. The sequence is that of RNA-splicing ligase RtcB1 from Escherichia coli (strain ATCC 25922 / DSM 1103 / LMG 8223 / NCIMB 12210 / NCTC 12241 / WDCM 00013 / Seattle 1946).